A 439-amino-acid chain; its full sequence is Probable eukaryotic translation initiation factor 5-1 (439 aa).

29–36 (GRGNGIKT) is a binding site for GTP. Residues 143–245 (LKNPPEQKKS…REAAEKRMKE (103 aa)) are disordered. A compositionally biased stretch (basic and acidic residues) spans 147–186 (PEQKKSSKDKKSMRRAEKERLREGEAADEEMRKLKKEAAS). Residues 214-228 (DENDQADSEEDDDDV) show a composition bias toward acidic residues. Thr232 carries the phosphothreonine modification. A compositionally biased stretch (basic and acidic residues) spans 234–245 (TSREAAEKRMKE). The W2 domain maps to 283-439 (KIPENAHEKL…QNAESESEEE (157 aa)). Phosphoserine is present on residues Ser434 and Ser436.

The protein belongs to the eIF-2-beta/eIF-5 family.

In terms of biological role, catalyzes the hydrolysis of GTP bound to the 40S ribosomal initiation complex (40S.mRNA.Met-tRNA[F].eIF-2.GTP) with the subsequent joining of a 60S ribosomal subunit resulting in the release of eIF-2 and the guanine nucleotide. The subsequent joining of a 60S ribosomal subunit results in the formation of a functional 80S initiation complex (80S.mRNA.Met-tRNA[F]). The polypeptide is Probable eukaryotic translation initiation factor 5-1 (Arabidopsis thaliana (Mouse-ear cress)).